We begin with the raw amino-acid sequence, 350 residues long: MEPKRIREGYLVKKGSVFNTWKPMWVVLLEDGIEFYKKKSDNSPKGMIPLKGSTLTSPCQDFGKRMFVLKITTTKQQDHFFQAAFLEERDAWVRDIKKAIKCIEGGQKFARKSTRRSIRLPETIDLGALYLSMKDPEKGIKELNLEKDKKVFNHCLTGSGVIDWLVSNKLVRNRQEGLMISASLLSEGYLQPAGDLSKNAADGIAENPFLDSPDAFYYFPDSGFFCEENSSDDDVILREEFRGVIIKQGCLLKQGHRRKNWKVRKFILREDPAYLHYYDPAGGEDPLGAVHLRGCVVTSVESSHDVKKSDEENLFEIITADEVHYYLQAATSKERTEWIKAIQVASRTGK.

Residues 4–101 (KRIREGYLVK…WVRDIKKAIK (98 aa)) enclose the PH 1 domain. The residue at position 64 (K64) is an N6-acetyllysine. A phosphoserine mark is found at S113 and S117. In terms of domain architecture, DEP spans 136 to 221 (PEKGIKELNL…SPDAFYYFPD (86 aa)). The PH 2 domain maps to 244–347 (VIIKQGCLLK…WIKAIQVASR (104 aa)).

In terms of biological role, major protein kinase C substrate of platelets. This Mus musculus (Mouse) protein is Pleckstrin (Plek).